A 376-amino-acid chain; its full sequence is Chaperone protein DnaJ (376 aa).

The J domain occupies 5-70 (DYYEILGVSK…QKRAAYDQYG (66 aa)). The CR-type zinc finger occupies 131-209 (GVTKEIRIPT…CHGHGRVERS (79 aa)). 8 residues coordinate Zn(2+): Cys-144, Cys-147, Cys-161, Cys-164, Cys-183, Cys-186, Cys-197, and Cys-200. 4 CXXCXGXG motif repeats span residues 144 to 151 (CDVCHGSG), 161 to 168 (CPTCHGSG), 183 to 190 (CPHCQGRG), and 197 to 204 (CNKCHGHG).

Belongs to the DnaJ family. In terms of assembly, homodimer. Requires Zn(2+) as cofactor.

It localises to the cytoplasm. Functionally, participates actively in the response to hyperosmotic and heat shock by preventing the aggregation of stress-denatured proteins and by disaggregating proteins, also in an autonomous, DnaK-independent fashion. Unfolded proteins bind initially to DnaJ; upon interaction with the DnaJ-bound protein, DnaK hydrolyzes its bound ATP, resulting in the formation of a stable complex. GrpE releases ADP from DnaK; ATP binding to DnaK triggers the release of the substrate protein, thus completing the reaction cycle. Several rounds of ATP-dependent interactions between DnaJ, DnaK and GrpE are required for fully efficient folding. Also involved, together with DnaK and GrpE, in the DNA replication of plasmids through activation of initiation proteins. This is Chaperone protein DnaJ from Shigella dysenteriae serotype 1 (strain Sd197).